The chain runs to 98 residues: UPF0235 protein Pmen_4153 (98 aa).

This sequence belongs to the UPF0235 family.

This chain is UPF0235 protein Pmen_4153, found in Ectopseudomonas mendocina (strain ymp) (Pseudomonas mendocina).